Consider the following 245-residue polypeptide: 1-(5-phosphoribosyl)-5-[(5-phosphoribosylamino)methylideneamino] imidazole-4-carboxamide isomerase (245 aa).

The active-site Proton acceptor is the Asp10. The active-site Proton donor is Asp135.

It belongs to the HisA/HisF family.

The protein resides in the cytoplasm. The catalysed reaction is 1-(5-phospho-beta-D-ribosyl)-5-[(5-phospho-beta-D-ribosylamino)methylideneamino]imidazole-4-carboxamide = 5-[(5-phospho-1-deoxy-D-ribulos-1-ylimino)methylamino]-1-(5-phospho-beta-D-ribosyl)imidazole-4-carboxamide. It participates in amino-acid biosynthesis; L-histidine biosynthesis; L-histidine from 5-phospho-alpha-D-ribose 1-diphosphate: step 4/9. The chain is 1-(5-phosphoribosyl)-5-[(5-phosphoribosylamino)methylideneamino] imidazole-4-carboxamide isomerase from Methanosarcina acetivorans (strain ATCC 35395 / DSM 2834 / JCM 12185 / C2A).